Consider the following 321-residue polypeptide: Olfactory receptor 14J1 (321 aa).

Topologically, residues 1–23 (MVNLTSMSGFLLMGFSDERKLQI) are extracellular. N-linked (GlcNAc...) asparagine glycosylation occurs at asparagine 3. Residues 24 to 44 (LHALVFLVTYLLALTGNLLII) traverse the membrane as a helical segment. Over 45-52 (TIITVDRR) the chain is Cytoplasmic. The chain crosses the membrane as a helical span at residues 53–73 (LHSPMYYFLKHLSLLDLCFIS). Residues 74–97 (VTVPQSIANSLMGNGYISLVQCIL) lie on the Extracellular side of the membrane. Residues cysteine 95 and cysteine 187 are joined by a disulfide bond. The chain crosses the membrane as a helical span at residues 98-118 (QVFFFIALASSEVAILTVMSY). At 119–137 (DRYAAICQPLHYETIMDPR) the chain is on the cytoplasmic side. A helical membrane pass occupies residues 138–158 (ACRHAVIAVWIAGGLSGLMHA). The Extracellular segment spans residues 159–194 (AINFSIPLCGKRVIHQFFCDVPQMLKLACSYEFINE). A helical transmembrane segment spans residues 195-215 (IALAAFTTSAAFICLISIVLS). The Cytoplasmic portion of the chain corresponds to 216–235 (YIRIFSTVLRIPSAEGRTKV). A helical membrane pass occupies residues 236–256 (FSTCLPHLFVATFFLSAAGFE). The Extracellular segment spans residues 257 to 269 (FLRLPSDSSSTVD). Residues 270 to 290 (LVFSVFYTVIPPTLNPVIYSL) traverse the membrane as a helical segment. Over 291–321 (RNDSMKAALRKMLSKEELPQRKMCLKAMFKL) the chain is Cytoplasmic.

The protein belongs to the G-protein coupled receptor 1 family.

It is found in the cell membrane. Its function is as follows. Odorant receptor. The sequence is that of Olfactory receptor 14J1 (OR14J1) from Homo sapiens (Human).